We begin with the raw amino-acid sequence, 209 residues long: Pyridoxine/pyridoxamine 5'-phosphate oxidase (209 aa).

Substrate contacts are provided by residues 7–10 (REDY) and Lys-64. FMN-binding positions include 59 to 64 (RIVLLK), 74 to 75 (FT), Arg-80, and Lys-81. Substrate contacts are provided by Tyr-121, Arg-125, and Ser-129. FMN-binding positions include 138 to 139 (QS) and Trp-182. A substrate-binding site is contributed by 188-190 (RLH). Arg-192 lines the FMN pocket.

The protein belongs to the pyridoxamine 5'-phosphate oxidase family. In terms of assembly, homodimer. Requires FMN as cofactor.

It carries out the reaction pyridoxamine 5'-phosphate + O2 + H2O = pyridoxal 5'-phosphate + H2O2 + NH4(+). The catalysed reaction is pyridoxine 5'-phosphate + O2 = pyridoxal 5'-phosphate + H2O2. It participates in cofactor metabolism; pyridoxal 5'-phosphate salvage; pyridoxal 5'-phosphate from pyridoxamine 5'-phosphate: step 1/1. Its pathway is cofactor metabolism; pyridoxal 5'-phosphate salvage; pyridoxal 5'-phosphate from pyridoxine 5'-phosphate: step 1/1. In terms of biological role, catalyzes the oxidation of either pyridoxine 5'-phosphate (PNP) or pyridoxamine 5'-phosphate (PMP) into pyridoxal 5'-phosphate (PLP). In Actinobacillus pleuropneumoniae serotype 5b (strain L20), this protein is Pyridoxine/pyridoxamine 5'-phosphate oxidase.